The following is a 326-amino-acid chain: Biotin synthase (326 aa).

The 228-residue stretch at Asn-51–Arg-278 folds into the Radical SAM core domain. 3 residues coordinate [4Fe-4S] cluster: Cys-66, Cys-70, and Cys-73. Cys-110, Cys-141, Cys-201, and Arg-273 together coordinate [2Fe-2S] cluster.

This sequence belongs to the radical SAM superfamily. Biotin synthase family. As to quaternary structure, homodimer. Requires [4Fe-4S] cluster as cofactor. The cofactor is [2Fe-2S] cluster.

The enzyme catalyses (4R,5S)-dethiobiotin + (sulfur carrier)-SH + 2 reduced [2Fe-2S]-[ferredoxin] + 2 S-adenosyl-L-methionine = (sulfur carrier)-H + biotin + 2 5'-deoxyadenosine + 2 L-methionine + 2 oxidized [2Fe-2S]-[ferredoxin]. The protein operates within cofactor biosynthesis; biotin biosynthesis; biotin from 7,8-diaminononanoate: step 2/2. Its function is as follows. Catalyzes the conversion of dethiobiotin (DTB) to biotin by the insertion of a sulfur atom into dethiobiotin via a radical-based mechanism. This is Biotin synthase from Paramagnetospirillum magneticum (strain ATCC 700264 / AMB-1) (Magnetospirillum magneticum).